Reading from the N-terminus, the 881-residue chain is Valine--tRNA ligase (881 aa).

The short motif at 49 to 59 (PNVTGKLHLGH) is the 'HIGH' region element. The 'KMSKS' region signature appears at 526-530 (KMSKS). An ATP-binding site is contributed by Lys-529. Positions 810-881 (LADLINLDEE…VRQRLADLEK (72 aa)) form a coiled coil.

It belongs to the class-I aminoacyl-tRNA synthetase family. ValS type 1 subfamily. Monomer.

The protein resides in the cytoplasm. It catalyses the reaction tRNA(Val) + L-valine + ATP = L-valyl-tRNA(Val) + AMP + diphosphate. Its function is as follows. Catalyzes the attachment of valine to tRNA(Val). As ValRS can inadvertently accommodate and process structurally similar amino acids such as threonine, to avoid such errors, it has a 'posttransfer' editing activity that hydrolyzes mischarged Thr-tRNA(Val) in a tRNA-dependent manner. This Bacillus thuringiensis subsp. konkukian (strain 97-27) protein is Valine--tRNA ligase.